The following is a 2694-amino-acid chain: Neurobeachin-like protein 1 (2694 aa).

Disordered stretches follow at residues 1289-1314, 1330-1350, and 1381-1411; these read VLMKDNDKNMSTEDTKKNSDEKTDEE, SLEDRHSLDSNTPLFPEDSSV, and CEMSDSGSQVPDSLPSTPSPVESTKSFSVHS. Basic and acidic residues predominate over residues 1290–1314; sequence LMKDNDKNMSTEDTKKNSDEKTDEE. A compositionally biased stretch (polar residues) spans 1383 to 1409; that stretch reads MSDSGSQVPDSLPSTPSPVESTKSFSV. The BEACH-type PH domain occupies 1883–1980; sequence DQKEKLVLME…VRNKIYSRLL (98 aa). The 293-residue stretch at 1992–2284 folds into the BEACH domain; sequence RSPQELFKAS…QLLKEPHPPR (293 aa). WD repeat units follow at residues 2439-2478 and 2490-2531; these read RHMDIVTCLATDYCGIHLISGSRDTTCMIWQITQQGGVPV and GHTN…RTLR.

Belongs to the WD repeat neurobeachin family. In terms of tissue distribution, highly expressed in brain, kidney, prostate and testis. Weakly expressed in ovary, small intestine, colon and peripheral blood leukocytes. May be correlative to several tumors, such as ovary serous adenocarcinoma and metastasis mammary gland carcinoma breast.

In Homo sapiens (Human), this protein is Neurobeachin-like protein 1 (NBEAL1).